The following is a 382-amino-acid chain: Galactokinase (382 aa).

Substrate is bound at residue 34-37 (EHTD). 124 to 130 (GAGLSSS) provides a ligand contact to ATP. Positions 130 and 162 each coordinate Mg(2+). The active-site Proton acceptor is Asp-174. Tyr-223 contributes to the substrate binding site.

It belongs to the GHMP kinase family. GalK subfamily.

It localises to the cytoplasm. It catalyses the reaction alpha-D-galactose + ATP = alpha-D-galactose 1-phosphate + ADP + H(+). The protein operates within carbohydrate metabolism; galactose metabolism. In terms of biological role, catalyzes the transfer of the gamma-phosphate of ATP to D-galactose to form alpha-D-galactose-1-phosphate (Gal-1-P). The polypeptide is Galactokinase (Shigella flexneri serotype 5b (strain 8401)).